Reading from the N-terminus, the 353-residue chain is Rhodopsin (353 aa).

At M1–A36 the chain is on the extracellular side. Residues N2 and N15 are each glycosylated (N-linked (GlcNAc...) asparagine). A helical membrane pass occupies residues Y37 to V61. At T62–N73 the chain is on the cytoplasmic side. Residues Y74 to Y96 form a helical membrane-spanning segment. Residues T97 to C110 are Extracellular-facing. An intrachain disulfide couples C110 to C187. The helical transmembrane segment at N111–V133 threads the bilayer. Positions E134–W136 match the 'Ionic lock' involved in activated form stabilization motif. Residues E134–H152 are Cytoplasmic-facing. A helical transmembrane segment spans residues A153 to V173. At G174–S202 the chain is on the extracellular side. N-linked (GlcNAc...) asparagine glycosylation is present at N200. The helical transmembrane segment at F203–G224 threads the bilayer. Over R225–R252 the chain is Cytoplasmic. The chain crosses the membrane as a helical span at residues M253–Y274. Over I275–L286 the chain is Extracellular. A helical membrane pass occupies residues F287 to F308. K296 is subject to N6-(retinylidene)lysine. Topologically, residues M309–A353 are cytoplasmic. 2 S-palmitoyl cysteine lipidation sites follow: C322 and C323. The disordered stretch occupies residues E329 to A353. Over residues S334 to A353 the composition is skewed to low complexity.

This sequence belongs to the G-protein coupled receptor 1 family. Opsin subfamily. Post-translationally, phosphorylated on some or all of the serine and threonine residues present in the C-terminal region. In terms of processing, contains one covalently linked retinal chromophore.

It is found in the membrane. The protein resides in the cell projection. The protein localises to the cilium. Its subcellular location is the photoreceptor outer segment. Its function is as follows. Photoreceptor required for image-forming vision at low light intensity. While most salt water fish species use retinal as chromophore, most freshwater fish use 3-dehydroretinal, or a mixture of retinal and 3-dehydroretinal. Light-induced isomerization of 11-cis to all-trans retinal triggers a conformational change that activates signaling via G-proteins. Subsequent receptor phosphorylation mediates displacement of the bound G-protein alpha subunit by arrestin and terminates signaling. The polypeptide is Rhodopsin (rho) (Solea solea (Common sole)).